Here is an 84-residue protein sequence, read N- to C-terminus: Small ribosomal subunit protein uS17 (84 aa).

This sequence belongs to the universal ribosomal protein uS17 family. Part of the 30S ribosomal subunit.

Functionally, one of the primary rRNA binding proteins, it binds specifically to the 5'-end of 16S ribosomal RNA. The chain is Small ribosomal subunit protein uS17 from Sodalis glossinidius (strain morsitans).